Here is a 555-residue protein sequence, read N- to C-terminus: Protein NRT1/ PTR FAMILY 5.4 (555 aa).

A run of 2 helical transmembrane segments spans residues 18 to 38 (AALF…GLAS) and 62 to 82 (WIGV…SILG). A Phosphothreonine modification is found at Thr-86. 10 consecutive transmembrane segments (helical) span residues 87–107 (VLLT…SVTV), 116–136 (VFFM…PCVM), 159–179 (NYWY…LIFI), 187–207 (LGFS…LIGI), 311–331 (IPIW…NTFF), 348–368 (IPPA…IPLY), 392–412 (IGVG…VEAK), 435–455 (LWLL…IVGM), 470–490 (IGAA…TGII), and 516–536 (YYYW…LFIA).

It belongs to the major facilitator superfamily. Proton-dependent oligopeptide transporter (POT/PTR) (TC 2.A.17) family. As to expression, expressed in roots and flowers.

Its subcellular location is the membrane. The sequence is that of Protein NRT1/ PTR FAMILY 5.4 (NPF5.4) from Arabidopsis thaliana (Mouse-ear cress).